We begin with the raw amino-acid sequence, 192 residues long: MVFIIDTQRHFAHQFTTNPFVIFSNLLGATGHSHAFYKRLTATFSRQRSFGRHIAVVDMWESIRWQILNGDEIEVSPEHRSLAWRELIINVASNTPLDNTFRTMFQKADFENFDYNTPIVYNLKTKTLTMYNERIRAALNRPVRFNDQTVNVNIAYVFLFFICIVLLSVLAVFFDTNIATDTKSKNVAAKIK.

Residues 154-174 (IAYVFLFFICIVLLSVLAVFF) traverse the membrane as a helical segment.

The protein localises to the host membrane. Its subcellular location is the virion. It localises to the host cytoplasm. It is found in the host nucleus. Functionally, per os infectivity factor. In Autographa californica nuclear polyhedrosis virus (AcMNPV), this protein is Per os infectivity factor 6 (AC68).